A 305-amino-acid chain; its full sequence is Acetylglutamate kinase (305 aa).

Residues Gly80–Gly81, Arg102, and Asn196 contribute to the substrate site.

This sequence belongs to the acetylglutamate kinase family. ArgB subfamily.

It localises to the cytoplasm. It catalyses the reaction N-acetyl-L-glutamate + ATP = N-acetyl-L-glutamyl 5-phosphate + ADP. It functions in the pathway amino-acid biosynthesis; L-arginine biosynthesis; N(2)-acetyl-L-ornithine from L-glutamate: step 2/4. Its function is as follows. Catalyzes the ATP-dependent phosphorylation of N-acetyl-L-glutamate. This Chlorobium luteolum (strain DSM 273 / BCRC 81028 / 2530) (Pelodictyon luteolum) protein is Acetylglutamate kinase.